We begin with the raw amino-acid sequence, 886 residues long: Protein translocase subunit SecA (886 aa).

ATP-binding positions include Gln-81, 99–103 (GEGKT), and Asp-489.

It belongs to the SecA family.

It is found in the plastid. Its subcellular location is the chloroplast stroma. The protein localises to the chloroplast thylakoid membrane. The enzyme catalyses ATP + H2O + cellular proteinSide 1 = ADP + phosphate + cellular proteinSide 2.. Its function is as follows. Has a central role in coupling the hydrolysis of ATP to the transfer of proteins across the thylakoid membrane. This Phaeodactylum tricornutum (strain CCAP 1055/1) protein is Protein translocase subunit SecA.